Reading from the N-terminus, the 425-residue chain is Glucose-6-phosphate 1-dehydrogenase (425 aa).

Residues Arg44 and Lys135 each coordinate NADP(+). Residues His165, Lys169, Glu201, and Asp220 each contribute to the substrate site. His225 serves as the catalytic Proton acceptor. Residue Lys311 participates in substrate binding.

Belongs to the glucose-6-phosphate dehydrogenase family.

It catalyses the reaction D-glucose 6-phosphate + NADP(+) = 6-phospho-D-glucono-1,5-lactone + NADPH + H(+). It functions in the pathway carbohydrate degradation; pentose phosphate pathway; D-ribulose 5-phosphate from D-glucose 6-phosphate (oxidative stage): step 1/3. In terms of biological role, catalyzes the oxidation of glucose 6-phosphate to 6-phosphogluconolactone. The chain is Glucose-6-phosphate 1-dehydrogenase from Helicobacter pylori (strain ATCC 700392 / 26695) (Campylobacter pylori).